The following is a 263-amino-acid chain: GTP cyclohydrolase FolE2 (263 aa).

It belongs to the GTP cyclohydrolase IV family.

The catalysed reaction is GTP + H2O = 7,8-dihydroneopterin 3'-triphosphate + formate + H(+). Its pathway is cofactor biosynthesis; 7,8-dihydroneopterin triphosphate biosynthesis; 7,8-dihydroneopterin triphosphate from GTP: step 1/1. Its function is as follows. Converts GTP to 7,8-dihydroneopterin triphosphate. The sequence is that of GTP cyclohydrolase FolE2 from Nitrosospira multiformis (strain ATCC 25196 / NCIMB 11849 / C 71).